The chain runs to 571 residues: Proline--tRNA ligase 1 (571 aa).

It belongs to the class-II aminoacyl-tRNA synthetase family. ProS type 1 subfamily. Homodimer.

The protein localises to the cytoplasm. The enzyme catalyses tRNA(Pro) + L-proline + ATP = L-prolyl-tRNA(Pro) + AMP + diphosphate. Functionally, catalyzes the attachment of proline to tRNA(Pro) in a two-step reaction: proline is first activated by ATP to form Pro-AMP and then transferred to the acceptor end of tRNA(Pro). As ProRS can inadvertently accommodate and process non-cognate amino acids such as alanine and cysteine, to avoid such errors it has two additional distinct editing activities against alanine. One activity is designated as 'pretransfer' editing and involves the tRNA(Pro)-independent hydrolysis of activated Ala-AMP. The other activity is designated 'posttransfer' editing and involves deacylation of mischarged Ala-tRNA(Pro). The misacylated Cys-tRNA(Pro) is not edited by ProRS. The polypeptide is Proline--tRNA ligase 1 (Clostridioides difficile (strain 630) (Peptoclostridium difficile)).